A 217-amino-acid polypeptide reads, in one-letter code: MKIVILLLVAYLLGSIPSGVWIGKLFFKKDIRQFGSGNTGTTNTFRVLGKPAGITVLLMDILKGTLATSLPYLFGLQGVNPLFFGVAAVLGHTFPIFANFKGGKAVATSAGMLLAYSPTFFIYSALIFVICLYLTSMVSLTSMISAVLITLSTIILPFTVPAILPTFNWLLTVIAIALTTFIFVRHRENIQRIKNGTESRLSFGLRAKKIKKKAVNK.

6 helical membrane passes run 3-23 (IVILLLVAYLLGSIPSGVWIG), 56-76 (VLLMDILKGTLATSLPYLFGL), 78-98 (GVNPLFFGVAAVLGHTFPIFA), 120-140 (FFIYSALIFVICLYLTSMVSL), 142-162 (SMISAVLITLSTIILPFTVPA), and 163-183 (ILPTFNWLLTVIAIALTTFIF).

Belongs to the PlsY family. Probably interacts with PlsX.

The protein resides in the cell membrane. The catalysed reaction is an acyl phosphate + sn-glycerol 3-phosphate = a 1-acyl-sn-glycero-3-phosphate + phosphate. It functions in the pathway lipid metabolism; phospholipid metabolism. In terms of biological role, catalyzes the transfer of an acyl group from acyl-phosphate (acyl-PO(4)) to glycerol-3-phosphate (G3P) to form lysophosphatidic acid (LPA). This enzyme utilizes acyl-phosphate as fatty acyl donor, but not acyl-CoA or acyl-ACP. The polypeptide is Glycerol-3-phosphate acyltransferase (Enterococcus faecalis (strain ATCC 700802 / V583)).